Reading from the N-terminus, the 286-residue chain is Undecaprenyl-diphosphatase (286 aa).

A run of 8 helical transmembrane segments spans residues valine 17–leucine 37, proline 49–phenylalanine 69, isoleucine 98–tryptophan 118, leucine 126–alanine 146, valine 159–valine 179, phenylalanine 204–alanine 224, leucine 232–leucine 252, and threonine 261–alanine 281.

The protein belongs to the UppP family.

The protein localises to the cell inner membrane. It carries out the reaction di-trans,octa-cis-undecaprenyl diphosphate + H2O = di-trans,octa-cis-undecaprenyl phosphate + phosphate + H(+). Catalyzes the dephosphorylation of undecaprenyl diphosphate (UPP). Confers resistance to bacitracin. This chain is Undecaprenyl-diphosphatase, found in Synechococcus sp. (strain RCC307).